The chain runs to 246 residues: Ubiquinone biosynthesis O-methyltransferase (246 aa).

Positions 36, 60, 81, and 123 each coordinate S-adenosyl-L-methionine.

This sequence belongs to the methyltransferase superfamily. UbiG/COQ3 family.

It carries out the reaction a 3-demethylubiquinol + S-adenosyl-L-methionine = a ubiquinol + S-adenosyl-L-homocysteine + H(+). The enzyme catalyses a 3-(all-trans-polyprenyl)benzene-1,2-diol + S-adenosyl-L-methionine = a 2-methoxy-6-(all-trans-polyprenyl)phenol + S-adenosyl-L-homocysteine + H(+). The protein operates within cofactor biosynthesis; ubiquinone biosynthesis. O-methyltransferase that catalyzes the 2 O-methylation steps in the ubiquinone biosynthetic pathway. The chain is Ubiquinone biosynthesis O-methyltransferase from Rickettsia typhi (strain ATCC VR-144 / Wilmington).